A 255-amino-acid chain; its full sequence is Transcription factor CAULIFLOWER (255 aa).

The region spanning Met1–Ser61 is the MADS-box domain. A K-box domain is found at Gln90–Ile180. Positions Gln90–Val198 form a coiled coil.

In terms of assembly, homodimer capable of binding to CArG-box sequences. In terms of tissue distribution, expressed in young flower primordia.

The protein localises to the nucleus. Functionally, probable transcription factor that promotes early floral meristem identity in synergy with APETALA1, FRUITFULL and LEAFY. Is required subsequently for the transition of an inflorescence meristem into a floral meristem. Seems to be partially redundant to the function of APETALA1. Positively regulates the APETALA1 and LEAFY expression. This is Transcription factor CAULIFLOWER (CAL) from Arabidopsis thaliana (Mouse-ear cress).